The chain runs to 2085 residues: Protein MLP1 homolog (2085 aa).

Coiled coils occupy residues 44–367 (KIRE…SHDG), 399–513 (KATQ…HVLI), 568–630 (YELQ…RMKS), 675–1205 (ANEA…KRTQ), 1232–1667 (LRRE…LQQE), and 1744–1799 (EIEA…AAKE). The segment at 365-398 (HDGVPGSVPQTPRANGSLLARPSSPFGTPASLRG) is disordered. Residues 934–953 (AERLRPLPTPRAPAAAEQPS) are disordered. Positions 1159–1166 (ERRQRLEQ) match the Nuclear localization signal motif. A compositionally biased stretch (polar residues) spans 1482 to 1503 (LATATEKNTSLQQQLAASSTEQ). 2 disordered regions span residues 1482–1514 (LATATEKNTSLQQQLAASSTEQPAAAPVSAAPS) and 1567–1591 (SGGDVATAETSVSAQPSAGLSDEER). Residues 1504–1514 (PAAAPVSAAPS) are compositionally biased toward low complexity. Polar residues predominate over residues 1574–1584 (AETSVSAQPSA). The segment at 1816–2085 (KPPAPAQAPA…GGGGGGGGNQ (270 aa)) is disordered. The span at 1817–1827 (PPAPAQAPAPA) shows a compositional bias: pro residues. 3 stretches are compositionally biased toward low complexity: residues 1843 to 1858 (VAPATAAPAAPAQAPS), 1910 to 1974 (QAGQ…PVPA), and 1982 to 1994 (ARTARGLYQAGPR). Residues 1995–2016 (GARGGRGGGFVGAGRGAGGAAG) are compositionally biased toward gly residues. Over residues 2028–2040 (GGATATAAAAAAA) the composition is skewed to low complexity. Gly residues-rich tracts occupy residues 2041–2051 (GGAGGSAGAGN) and 2076–2085 (GGGGGGGGNQ).

In terms of assembly, the nuclear pore complex (NPC) constitutes the exclusive means of nucleocytoplasmic transport. NPCs allow the passive diffusion of ions and small molecules and the active, nuclear transport receptor-mediated bidirectional transport of macromolecules such as proteins, RNAs, ribonucleoparticles (RNPs), and ribosomal subunits across the nuclear envelope. The 55-60 MDa NPC is composed of at least 28 different subunits: AMO1, ELYS, GLE1, GLE2, MLP1, NDC1, NIC96, NSP1, NUP133, NUP145, NUP152, NUP159, NUP170, NUP188, NUP192, NUP37, NUP49, NUP53, NUP56, NUP57, NUP82, NUP84, NUP85, POM152, POM33, POM34, SEC13 and SEH1. Due to its 8-fold rotational symmetry, all subunits are present with 8 copies or multiples thereof.

It is found in the nucleus. Functionally, involved in the structural and functional organization of perinuclear chromatin. Associates with the nuclear pore complex and form filamentous structures along the nuclear periphery. The polypeptide is Protein MLP1 homolog (MLP1) (Chaetomium thermophilum (strain DSM 1495 / CBS 144.50 / IMI 039719) (Thermochaetoides thermophila)).